Consider the following 410-residue polypeptide: Translation initiation factor 2 subunit gamma (410 aa).

In terms of domain architecture, tr-type G spans 6 to 203 (QSEINIGMVG…AIEDLMPTPE (198 aa)). The segment at 15–22 (GHVDHGKT) is G1. Positions 18, 22, 43, and 45 each coordinate Mg(2+). 18-23 (DHGKTS) lines the GTP pocket. A G2 region spans residues 43–47 (GISIR). Zn(2+)-binding residues include Cys-58, Cys-61, Cys-73, and Cys-76. The segment at 90–93 (DAPG) is G3. GTP contacts are provided by residues 146–149 (NKID) and 181–183 (SAH). Residues 146-149 (NKID) form a G4 region. The segment at 181-183 (SAH) is G5.

This sequence belongs to the TRAFAC class translation factor GTPase superfamily. Classic translation factor GTPase family. EIF2G subfamily. As to quaternary structure, heterotrimer composed of an alpha, a beta and a gamma chain. It depends on Mg(2+) as a cofactor.

It carries out the reaction GTP + H2O = GDP + phosphate + H(+). Functionally, eIF-2 functions in the early steps of protein synthesis by forming a ternary complex with GTP and initiator tRNA. The chain is Translation initiation factor 2 subunit gamma from Methanococcus aeolicus (strain ATCC BAA-1280 / DSM 17508 / OCM 812 / Nankai-3).